The chain runs to 292 residues: ATP synthase gamma chain (292 aa).

It belongs to the ATPase gamma chain family. F-type ATPases have 2 components, CF(1) - the catalytic core - and CF(0) - the membrane proton channel. CF(1) has five subunits: alpha(3), beta(3), gamma(1), delta(1), epsilon(1). CF(0) has three main subunits: a, b and c.

It is found in the cell inner membrane. Functionally, produces ATP from ADP in the presence of a proton gradient across the membrane. The gamma chain is believed to be important in regulating ATPase activity and the flow of protons through the CF(0) complex. This is ATP synthase gamma chain from Rhodopseudomonas palustris (strain BisB18).